Reading from the N-terminus, the 207-residue chain is MYSAPSACTCLCLHFLLLCFQVQVLAAEENVDFRIHVENQTRARDDVSRKQLRLYQLYSRTSGKHIQVLGRRISARGEDGDKYAQLLVETDTFGSQVRIKGKETEFYLCMNRKGKLVGKPDGTSKECVFIEKVLENNYTALMSAKYSGWYVGFTKKGRPRKGPKTRENQQDVHFMKRYPKGQAELQKPFKYTTVTKRSRRIRPTHPG.

The N-terminal stretch at Met-1–Ala-27 is a signal peptide. N-linked (GlcNAc...) asparagine glycosylation is present at Asn-39. Cys-109 and Cys-127 form a disulfide bridge. An N-linked (GlcNAc...) asparagine glycan is attached at Asn-137.

This sequence belongs to the heparin-binding growth factors family. As to quaternary structure, interacts with FGFR3 and FGFR4.

Its subcellular location is the secreted. In terms of biological role, plays an important role in the regulation of cell proliferation, cell differentiation and cell migration. Required for normal ossification and bone development. Stimulates hepatic and intestinal proliferation. In Mus musculus (Mouse), this protein is Fibroblast growth factor 18 (Fgf18).